The following is a 510-amino-acid chain: ATP synthase subunit alpha (510 aa).

169–176 provides a ligand contact to ATP; it reads GDRQTGKT.

This sequence belongs to the ATPase alpha/beta chains family. In terms of assembly, F-type ATPases have 2 components, CF(1) - the catalytic core - and CF(0) - the membrane proton channel. CF(1) has five subunits: alpha(3), beta(3), gamma(1), delta(1), epsilon(1). CF(0) has three main subunits: a(1), b(2) and c(9-12). The alpha and beta chains form an alternating ring which encloses part of the gamma chain. CF(1) is attached to CF(0) by a central stalk formed by the gamma and epsilon chains, while a peripheral stalk is formed by the delta and b chains.

Its subcellular location is the cell inner membrane. The enzyme catalyses ATP + H2O + 4 H(+)(in) = ADP + phosphate + 5 H(+)(out). Produces ATP from ADP in the presence of a proton gradient across the membrane. The alpha chain is a regulatory subunit. The chain is ATP synthase subunit alpha from Methylobacterium radiotolerans (strain ATCC 27329 / DSM 1819 / JCM 2831 / NBRC 15690 / NCIMB 10815 / 0-1).